The primary structure comprises 152 residues: UPF0266 membrane protein Ent638_2389 (152 aa).

The next 3 membrane-spanning stretches (helical) occupy residues 6–26 (IVLV…EFIM), 45–65 (VDAF…VMSQ), and 67–87 (ALLT…LFWI).

The protein belongs to the UPF0266 family.

Its subcellular location is the cell inner membrane. The polypeptide is UPF0266 membrane protein Ent638_2389 (Enterobacter sp. (strain 638)).